The sequence spans 165 residues: Protein SprT (165 aa).

The 148-residue stretch at 10 to 157 (EACYRQAEDF…YCRRCKATLV (148 aa)) folds into the SprT-like domain. Residue His69 participates in Zn(2+) binding. The active site involves Glu70. Zn(2+) is bound at residue His73.

This sequence belongs to the SprT family. Requires Zn(2+) as cofactor.

The protein localises to the cytoplasm. The chain is Protein SprT from Pseudomonas paraeruginosa (strain DSM 24068 / PA7) (Pseudomonas aeruginosa (strain PA7)).